A 595-amino-acid chain; its full sequence is Metacaspase-1 (595 aa).

Active-site residues include His411 and Cys466.

The protein belongs to the peptidase C14B family. In terms of assembly, monomer.

Activated by Ca(2+). Functionally, cysteine protease that cleaves specifically after arginine or lysine residues. This is Metacaspase-1 from Plasmodium berghei (strain Anka).